Here is a 224-residue protein sequence, read N- to C-terminus: Cytidylate kinase (224 aa).

Position 10–18 (10–18 (GPSGVGKGT)) interacts with ATP.

Belongs to the cytidylate kinase family. Type 1 subfamily.

The protein resides in the cytoplasm. It catalyses the reaction CMP + ATP = CDP + ADP. The catalysed reaction is dCMP + ATP = dCDP + ADP. This Haemophilus ducreyi (strain 35000HP / ATCC 700724) protein is Cytidylate kinase.